We begin with the raw amino-acid sequence, 197 residues long: LexA repressor (197 aa).

The H-T-H motif DNA-binding region spans 28 to 47 (VREIARRFRITPRGALLHLI). Active-site for autocatalytic cleavage activity residues include Ser119 and Lys156.

This sequence belongs to the peptidase S24 family. In terms of assembly, homodimer.

The enzyme catalyses Hydrolysis of Ala-|-Gly bond in repressor LexA.. Functionally, represses a number of genes involved in the response to DNA damage (SOS response), including recA and lexA. In the presence of single-stranded DNA, RecA interacts with LexA causing an autocatalytic cleavage which disrupts the DNA-binding part of LexA, leading to derepression of the SOS regulon and eventually DNA repair. The protein is LexA repressor of Thermotoga petrophila (strain ATCC BAA-488 / DSM 13995 / JCM 10881 / RKU-1).